The sequence spans 768 residues: Protein transport protein Sec23A (768 aa).

Residue T2 is modified to N-acetylthreonine. Residues C61, C66, C85, and C88 each contribute to the Zn(2+) site. T308 is subject to Phosphothreonine. A Gelsolin-like repeat occupies 632-718 (PEPVLLDSSS…EHGGSQARFL (87 aa)).

The protein belongs to the SEC23/SEC24 family. SEC23 subfamily. COPII is composed of at least five proteins: the Sec23/24 complex, the Sec13/31 complex and Sar1. Interacts with SEC23IP. Interacts with HTR4. Interacts with SEC16A. Interacts with SLC6A4. Interacts (as part of the Sec23/24 complex) with SEC22B; recruits SEC22B into COPII-coated vesicles and allows the transport of this cargo from the endoplasmic reticulum to the Golgi. Interacts (via Gelsolin-like repeat) with MIA2 and MIA3; specifically involved in the transport of large cargos like the collagen COL7A1. Interacts with DDHD1. Interacts with TMEM39A. Interacts with SACM1L; this interaction is reduced in the absence of TMEM39A. Interacts with kinase FAM20C; transport of FAM20C from the endoplasmic reticulum to the Golgi is likely to be mediated by COPII vesicles.

The protein resides in the cytoplasmic vesicle. Its subcellular location is the COPII-coated vesicle membrane. It localises to the endoplasmic reticulum membrane. The protein localises to the cytoplasm. It is found in the cytosol. Functionally, component of the coat protein complex II (COPII) which promotes the formation of transport vesicles from the endoplasmic reticulum (ER). The coat has two main functions, the physical deformation of the endoplasmic reticulum membrane into vesicles and the selection of cargo molecules for their transport to the Golgi complex. Required for the translocation of insulin-induced glucose transporter SLC2A4/GLUT4 to the cell membrane. In Bos taurus (Bovine), this protein is Protein transport protein Sec23A.